Here is a 217-residue protein sequence, read N- to C-terminus: Probable GTP-binding protein EngB (217 aa).

The region spanning 44–217 (DRIEVCFAGR…TLRTIVATLG (174 aa)) is the EngB-type G domain. GTP is bound by residues 52–59 (GRSNVGKS), 79–83 (GRTQE), 97–100 (DLPG), 164–167 (TKAD), and 198–200 (TSS). Serine 59 and threonine 81 together coordinate Mg(2+).

Belongs to the TRAFAC class TrmE-Era-EngA-EngB-Septin-like GTPase superfamily. EngB GTPase family. It depends on Mg(2+) as a cofactor.

In terms of biological role, necessary for normal cell division and for the maintenance of normal septation. The chain is Probable GTP-binding protein EngB from Cereibacter sphaeroides (strain ATCC 17023 / DSM 158 / JCM 6121 / CCUG 31486 / LMG 2827 / NBRC 12203 / NCIMB 8253 / ATH 2.4.1.) (Rhodobacter sphaeroides).